Reading from the N-terminus, the 341-residue chain is 4-hydroxy-2-oxovalerate aldolase (341 aa).

In terms of domain architecture, Pyruvate carboxyltransferase spans 9–259 (VRITEVCLRD…KLDIDLYKMM (251 aa)). 17–18 (RD) is a substrate binding site. Residue D18 participates in Mn(2+) binding. H21 acts as the Proton acceptor in catalysis. Substrate is bound by residues S171 and H198. H198 and H200 together coordinate Mn(2+). Substrate is bound at residue Y289.

It belongs to the 4-hydroxy-2-oxovalerate aldolase family.

It catalyses the reaction (S)-4-hydroxy-2-oxopentanoate = acetaldehyde + pyruvate. The chain is 4-hydroxy-2-oxovalerate aldolase from Bacillus thuringiensis (strain Al Hakam).